Consider the following 164-residue polypeptide: Superoxide dismutase [Cu-Zn] 3 (164 aa).

Residues His-51, His-53, and His-68 each coordinate Cu cation. A disulfide bridge links Cys-62 with Cys-151. Residues His-68, His-76, His-85, and Asp-88 each contribute to the Zn(2+) site. Residue His-125 coordinates Cu cation. The Peroxisome localization signal signature appears at 162–164 (AKL).

This sequence belongs to the Cu-Zn superoxide dismutase family. In terms of assembly, homodimer. It depends on Cu cation as a cofactor. Zn(2+) is required as a cofactor. Expressed in leaves (at protein level).

Its subcellular location is the peroxisome. The catalysed reaction is 2 superoxide + 2 H(+) = H2O2 + O2. In terms of biological role, destroys radicals which are normally produced within the cells and which are toxic to biological systems. The polypeptide is Superoxide dismutase [Cu-Zn] 3 (CSD3) (Arabidopsis thaliana (Mouse-ear cress)).